The primary structure comprises 417 residues: Serine hydroxymethyltransferase (417 aa).

At Lys-54 the chain carries N6-acetyllysine. (6S)-5,6,7,8-tetrahydrofolate contacts are provided by residues Leu-121 and 125–127 (GHL). Position 229 is an N6-(pyridoxal phosphate)lysine (Lys-229). An N6-acetyllysine mark is found at Lys-250, Lys-285, and Lys-354. 355–357 (SPF) contacts (6S)-5,6,7,8-tetrahydrofolate. Position 375 is an N6-acetyllysine (Lys-375).

This sequence belongs to the SHMT family. As to quaternary structure, homodimer. Pyridoxal 5'-phosphate is required as a cofactor.

The protein resides in the cytoplasm. It carries out the reaction (6R)-5,10-methylene-5,6,7,8-tetrahydrofolate + glycine + H2O = (6S)-5,6,7,8-tetrahydrofolate + L-serine. It participates in one-carbon metabolism; tetrahydrofolate interconversion. The protein operates within amino-acid biosynthesis; glycine biosynthesis; glycine from L-serine: step 1/1. Catalyzes the reversible interconversion of serine and glycine with tetrahydrofolate (THF) serving as the one-carbon carrier. This reaction serves as the major source of one-carbon groups required for the biosynthesis of purines, thymidylate, methionine, and other important biomolecules. Also exhibits THF-independent aldolase activity toward beta-hydroxyamino acids, producing glycine and aldehydes, via a retro-aldol mechanism. The chain is Serine hydroxymethyltransferase from Escherichia coli O1:K1 / APEC.